Consider the following 184-residue polypeptide: ATP synthase subunit b (184 aa).

The chain crosses the membrane as a helical span at residues 16–36 (LIPPIPELVIGLIAFVIVFGF).

The protein belongs to the ATPase B chain family. As to quaternary structure, F-type ATPases have 2 components, F(1) - the catalytic core - and F(0) - the membrane proton channel. F(1) has five subunits: alpha(3), beta(3), gamma(1), delta(1), epsilon(1). F(0) has three main subunits: a(1), b(2) and c(10-14). The alpha and beta chains form an alternating ring which encloses part of the gamma chain. F(1) is attached to F(0) by a central stalk formed by the gamma and epsilon chains, while a peripheral stalk is formed by the delta and b chains.

Its subcellular location is the cell membrane. Functionally, f(1)F(0) ATP synthase produces ATP from ADP in the presence of a proton or sodium gradient. F-type ATPases consist of two structural domains, F(1) containing the extramembraneous catalytic core and F(0) containing the membrane proton channel, linked together by a central stalk and a peripheral stalk. During catalysis, ATP synthesis in the catalytic domain of F(1) is coupled via a rotary mechanism of the central stalk subunits to proton translocation. In terms of biological role, component of the F(0) channel, it forms part of the peripheral stalk, linking F(1) to F(0). The polypeptide is ATP synthase subunit b (Streptomyces coelicolor (strain ATCC BAA-471 / A3(2) / M145)).